Reading from the N-terminus, the 1203-residue chain is Metabotropic glutamate receptor 5 (1203 aa).

The first 18 residues, 1–18 (MVLLLILSVLLLKEDVRG), serve as a signal peptide directing secretion. Residues 19–579 (SAQSSERRVV…QYLRWGDPEP (561 aa)) are Extracellular-facing. Cys-57 and Cys-99 are joined by a disulfide. Position 64 (Tyr-64) interacts with L-glutamate. An N-linked (GlcNAc...) asparagine glycan is attached at Asn-88. L-glutamate-binding positions include Ser-151 and 172–174 (SAT). Asn-209 carries an N-linked (GlcNAc...) asparagine glycan. An L-glutamate-binding site is contributed by Tyr-222. Disulfide bonds link Cys-240–Cys-529, Cys-275–Cys-277, Cys-364–Cys-380, Cys-418–Cys-425, Cys-510–Cys-530, Cys-514–Cys-533, Cys-536–Cys-548, and Cys-551–Cys-564. Asp-304 serves as a coordination point for L-glutamate. 2 N-linked (GlcNAc...) asparagine glycosylation sites follow: Asn-377 and Asn-381. Lys-395 serves as a coordination point for L-glutamate. Asn-444 is a glycosylation site (N-linked (GlcNAc...) asparagine). A helical transmembrane segment spans residues 580-602 (IAAVVFACLGLLATLFVTVIFII). At 603–612 (YRDTPVVKSS) the chain is on the cytoplasmic side. The chain crosses the membrane as a helical span at residues 613–635 (SRELCYIILAGICLGYLCTFCLI). The Extracellular portion of the chain corresponds to 636 to 643 (AKPKQIYC). Residues Cys-643 and Cys-732 are joined by a disulfide bond. The chain crosses the membrane as a helical span at residues 644–666 (YLQRIGIGLSPAMSYSALVTKTN). Over 667 to 692 (RIARILAGSKKKICTKKPRFMSACAQ) the chain is Cytoplasmic. The helical transmembrane segment at 693–713 (LVIAFILICIQLGIIVALFIM) threads the bilayer. The Extracellular segment spans residues 714-736 (EPPDIMHDYPSIREVYLICNTTN). Asn-733 carries N-linked (GlcNAc...) asparagine glycosylation. The chain crosses the membrane as a helical span at residues 737-758 (LGVVTPLGYNGLLILSCTFYAF). The Cytoplasmic portion of the chain corresponds to 759 to 771 (KTRNVPANFNEAK). Residues 772–794 (YIAFTMYTTCIIWLAFVPIYFGS) form a helical membrane-spanning segment. The Extracellular portion of the chain corresponds to 795-797 (NYK). The helical transmembrane segment at 798 to 819 (IITMCFSVSLSATVALGCMFVP) threads the bilayer. The Cytoplasmic segment spans residues 820-1203 (KVYIILAKPE…RDYTQSSSSL (384 aa)). The residue at position 860 (Ser-860) is a Phosphoserine. Arg-868 carries the post-translational modification Omega-N-methylarginine. Disordered stretches follow at residues 892-1054 (FTPK…GSLM) and 1120-1182 (TGGA…ALCI). Over residues 905–920 (TMSSSNGKSVTWAQNE) the composition is skewed to polar residues. An Omega-N-methylarginine modification is found at Arg-924. The span at 960–977 (QGAGAGGGSGPGAAGAGS) shows a compositional bias: gly residues. Residues 1007–1019 (PAAARPRSPSPIS) show a composition bias toward low complexity. 2 positions are modified to phosphoserine: Ser-1014 and Ser-1016. Polar residues-rich tracts occupy residues 1039–1054 (HSET…GSLM) and 1165–1176 (DSGSTTPNSPVS).

This sequence belongs to the G-protein coupled receptor 3 family. As to quaternary structure, the PPXXF motif binds HOMER1, HOMER2 and HOMER3. Interacts with RYR1, RYR2, ITPR1, SHANK1 and SHANK3. Interacts with SIAH1 and TAMALIN. Interacts with NCDN. Interacts with NECAB2. Interacts with CAMK2A.

The protein localises to the cell membrane. Functionally, G-protein coupled receptor for glutamate. Ligand binding causes a conformation change that triggers signaling via guanine nucleotide-binding proteins (G proteins) and modulates the activity of down-stream effectors. Signaling activates a phosphatidylinositol-calcium second messenger system and generates a calcium-activated chloride current. Plays an important role in the regulation of synaptic plasticity and the modulation of the neural network activity. This is Metabotropic glutamate receptor 5 (Grm5) from Mus musculus (Mouse).